The chain runs to 423 residues: Imidazolonepropionase (423 aa).

Residues His-78 and His-80 each contribute to the Fe(3+) site. 2 residues coordinate Zn(2+): His-78 and His-80. Positions 87, 150, and 183 each coordinate 4-imidazolone-5-propanoate. Tyr-150 provides a ligand contact to N-formimidoyl-L-glutamate. His-247 provides a ligand contact to Fe(3+). His-247 contributes to the Zn(2+) binding site. Glu-250 provides a ligand contact to 4-imidazolone-5-propanoate. Asp-322 provides a ligand contact to Fe(3+). A Zn(2+)-binding site is contributed by Asp-322. Residues Asn-324 and Gly-326 each contribute to the N-formimidoyl-L-glutamate site. Ser-327 is a 4-imidazolone-5-propanoate binding site.

This sequence belongs to the metallo-dependent hydrolases superfamily. HutI family. Zn(2+) serves as cofactor. Requires Fe(3+) as cofactor.

It is found in the cytoplasm. The catalysed reaction is 4-imidazolone-5-propanoate + H2O = N-formimidoyl-L-glutamate. The protein operates within amino-acid degradation; L-histidine degradation into L-glutamate; N-formimidoyl-L-glutamate from L-histidine: step 3/3. Functionally, catalyzes the hydrolytic cleavage of the carbon-nitrogen bond in imidazolone-5-propanoate to yield N-formimidoyl-L-glutamate. It is the third step in the universal histidine degradation pathway. The protein is Imidazolonepropionase of Bacillus cereus (strain B4264).